The following is a 249-amino-acid chain: Homeobox-leucine zipper protein HOX6 (249 aa).

A disordered region spans residues 1–32; that stretch reads MDGEEDSEWMMMDVGGKGGKGGGGGGAADRKK. Over residues 15–27 the composition is skewed to gly residues; that stretch reads GGKGGKGGGGGGA. The segment at residues 27–86 is a DNA-binding region (homeobox); it reads AADRKKRFSEEQIKSLESMFATQTKLEPRQKLQLARELGLQPRQVAIWFQNKRARWKSKQ. The leucine-zipper stretch occupies residues 85–129; the sequence is KQLEREYSALRDDYDALLCSYESLKKEKLALIKQLEKLAEMLQEP. Residues 194–249 form a disordered region; it reads FLRPSSQHHPPPPHAGAGFTSSEPAADHQSFNFHSSWPSSTEQTCSSTPWWEFESE. The segment covering 212–242 has biased composition (polar residues); sequence FTSSEPAADHQSFNFHSSWPSSTEQTCSSTP.

This sequence belongs to the HD-ZIP homeobox family. Class I subfamily. In terms of tissue distribution, expressed in seedlings, roots, leaves, nodes, internodes, flowers and embryo.

Its subcellular location is the nucleus. In terms of biological role, probable transcription factor that binds to the DNA sequence 5'-CAAT[AT]ATTG-3'. The polypeptide is Homeobox-leucine zipper protein HOX6 (HOX6) (Oryza sativa subsp. indica (Rice)).